The chain runs to 218 residues: Small ribosomal subunit protein uS3c (218 aa).

One can recognise a KH type-2 domain in the interval 43–118; it reads IKNYVQKNMR…KLNIAITRIA (76 aa).

It belongs to the universal ribosomal protein uS3 family. In terms of assembly, part of the 30S ribosomal subunit.

The protein resides in the plastid. Its subcellular location is the chloroplast. This Buxus microphylla (Littleleaf boxwood) protein is Small ribosomal subunit protein uS3c (rps3).